The following is a 218-amino-acid chain: Ras-related protein R-Ras (218 aa).

Residues 1–30 (MSSGAASGTGRGRPRGGGPGPGDPPPSETH) are disordered. Over residues 7–20 (SGTGRGRPRGGGPG) the composition is skewed to gly residues. 36–44 (GGGGVGKSA) provides a ligand contact to GTP. Residues 58 to 66 (YDPTIEDSY) carry the Effector region motif. GTP is bound by residues 83–87 (DTAGQ), 142–145 (NKAD), and 172–174 (SAK). A Cysteine methyl ester modification is found at cysteine 215. Cysteine 215 carries the S-geranylgeranyl cysteine lipid modification. Residues 216-218 (VLL) constitute a propeptide, removed in mature form.

This sequence belongs to the small GTPase superfamily. Ras family. As to quaternary structure, interacts with PLCE1. Interacts (active GTP-bound form preferentially) with RGS14. Interacts with OSBPL3. Interacts with ZDHHC19. Post-translationally, S-palmitoylated by ZDHHC19, leading to increased association with membranes and with rafts/caveolae as well as enhanced cell viability.

Its subcellular location is the cell membrane. It catalyses the reaction GTP + H2O = GDP + phosphate + H(+). In terms of biological role, GTP-binding protein with GTPase activity, likely involved in the regulation of MAPK signaling pathway and thereby controlling multiple cellular processes. Regulates the organization of the actin cytoskeleton. With OSPBL3, modulates integrin beta-1 (ITGB1) activity. This chain is Ras-related protein R-Ras (RRAS), found in Homo sapiens (Human).